A 362-amino-acid chain; its full sequence is Chorismate synthase (362 aa).

Arg48 and Arg54 together coordinate NADP(+). FMN contacts are provided by residues 125 to 127 (RSS), 238 to 239 (NA), Gly278, 293 to 297 (KPTSS), and Arg319.

The protein belongs to the chorismate synthase family. As to quaternary structure, homotetramer. FMNH2 serves as cofactor.

The enzyme catalyses 5-O-(1-carboxyvinyl)-3-phosphoshikimate = chorismate + phosphate. It functions in the pathway metabolic intermediate biosynthesis; chorismate biosynthesis; chorismate from D-erythrose 4-phosphate and phosphoenolpyruvate: step 7/7. Catalyzes the anti-1,4-elimination of the C-3 phosphate and the C-6 proR hydrogen from 5-enolpyruvylshikimate-3-phosphate (EPSP) to yield chorismate, which is the branch point compound that serves as the starting substrate for the three terminal pathways of aromatic amino acid biosynthesis. This reaction introduces a second double bond into the aromatic ring system. In Aeromonas salmonicida (strain A449), this protein is Chorismate synthase.